The primary structure comprises 218 residues: Small ribosomal subunit protein uS5 (218 aa).

The 64-residue stretch at 55–118 (LDHEVIDVSI…RNAKLNIIPV (64 aa)) folds into the S5 DRBM domain.

Belongs to the universal ribosomal protein uS5 family. Part of the 30S ribosomal subunit. Contacts protein S4.

In terms of biological role, with S4 and S12 plays an important role in translational accuracy. This is Small ribosomal subunit protein uS5 from Aeropyrum pernix (strain ATCC 700893 / DSM 11879 / JCM 9820 / NBRC 100138 / K1).